Here is a 501-residue protein sequence, read N- to C-terminus: Pyruvate dehydrogenase protein X component, mitochondrial (501 aa).

The N-terminal 53 residues, 1–53 (MAASWRLHCNQPLLRYLLGFSSRRSLGLAQGAAAWPVDRGASWRWFHSTQLLQ), are a transit peptide targeting the mitochondrion. The region spanning 56–132 (PIKVLMPSLS…QLGSLIALMV (77 aa)) is the Lipoyl-binding domain. K97 carries the post-translational modification N6-lipoyllysine. The tract at residues 145–176 (KDVSAPPPVSKPPAPTQPSPQPQIPCPARKEH) is disordered. A compositionally biased stretch (pro residues) spans 149 to 169 (APPPVSKPPAPTQPSPQPQIP). The 38-residue stretch at 183-220 (RLSPAARNILEKHSLDASQGTATGPRGIFTKEDALKLV) folds into the Peripheral subunit-binding (PSBD) domain. K194 is modified (N6-acetyllysine). Phosphoserine is present on S196. Positions 228-256 (ITESRPASAPPPSLSASVPPQATAGPSYP) are disordered. K394 is modified (N6-succinyllysine).

It belongs to the 2-oxoacid dehydrogenase family. In terms of assembly, part of the inner core of the multimeric pyruvate dehydrogenase complex that is composed of about 48 DLAT and 12 PDHX molecules. This core binds multiple copies of pyruvate dehydrogenase (subunits PDH1A and PDHB, E1), dihydrolipoamide acetyltransferase (DLAT, E2) and lipoamide dehydrogenase (DLD, E3). Interacts with SIRT4. Interacts with DLD. In terms of processing, delipoylated at Lys-97 by SIRT4, delipoylation decreases the PHD complex activity.

It localises to the mitochondrion matrix. Required for anchoring dihydrolipoamide dehydrogenase (E3) to the dihydrolipoamide transacetylase (E2) core of the pyruvate dehydrogenase complexes of eukaryotes. This specific binding is essential for a functional PDH complex. The polypeptide is Pyruvate dehydrogenase protein X component, mitochondrial (Pdhx) (Mus musculus (Mouse)).